Consider the following 1031-residue polypeptide: Kinesin heavy chain (1031 aa).

The 318-residue stretch at 8 to 325 (NIKVVCRVRP…LMFGQRAKTI (318 aa)) folds into the Kinesin motor domain. 84–91 (GQTSSGKT) contacts ATP. A coiled-coil region spans residues 393–857 (PKQMTVHVSE…RDNADLRCEL (465 aa)). The segment covering 673–686 (TDQEDKKREEEDKM) has biased composition (basic and acidic residues). Disordered stretches follow at residues 673 to 692 (TDQE…ATEM) and 906 to 1031 (RNFA…EQGS). Residues 858–1031 (PKLERRLRAT…PLTTSGEQGS (174 aa)) form a globular region. The segment covering 932–949 (GSTGIRGGGYSGIRGGGS) has biased composition (gly residues). 2 stretches are compositionally biased toward polar residues: residues 964–977 (SHNN…NPND) and 1014–1031 (RNNT…EQGS).

The protein belongs to the TRAFAC class myosin-kinesin ATPase superfamily. Kinesin family. Kinesin subfamily. As to quaternary structure, oligomer composed of two heavy chains and two light chains.

It is found in the cytoplasm. The protein localises to the cytoskeleton. In terms of biological role, kinesin is a microtubule-associated force-producing protein that may play a role in organelle transport. The chain is Kinesin heavy chain from Strongylocentrotus purpuratus (Purple sea urchin).